The sequence spans 366 residues: tRNA N6-adenosine threonylcarbamoyltransferase (366 aa).

Positions 119 and 123 each coordinate Fe cation. Substrate-binding positions include 142–146 (LVSGG), Asp175, Gly188, Asp192, and Asn281. Position 309 (Asp309) interacts with Fe cation.

Belongs to the KAE1 / TsaD family. Requires Fe(2+) as cofactor.

It localises to the cytoplasm. It carries out the reaction L-threonylcarbamoyladenylate + adenosine(37) in tRNA = N(6)-L-threonylcarbamoyladenosine(37) in tRNA + AMP + H(+). Its function is as follows. Required for the formation of a threonylcarbamoyl group on adenosine at position 37 (t(6)A37) in tRNAs that read codons beginning with adenine. Is involved in the transfer of the threonylcarbamoyl moiety of threonylcarbamoyl-AMP (TC-AMP) to the N6 group of A37, together with TsaE and TsaB. TsaD likely plays a direct catalytic role in this reaction. This is tRNA N6-adenosine threonylcarbamoyltransferase from Synechococcus sp. (strain JA-3-3Ab) (Cyanobacteria bacterium Yellowstone A-Prime).